A 322-amino-acid chain; its full sequence is Cytochrome f (322 aa).

A signal peptide spans Met1–Ser35. Heme contacts are provided by Tyr38, Cys58, Cys61, and His62. The helical transmembrane segment at Val288–Lys308 threads the bilayer.

This sequence belongs to the cytochrome f family. In terms of assembly, the 4 large subunits of the cytochrome b6-f complex are cytochrome b6, subunit IV (17 kDa polypeptide, petD), cytochrome f and the Rieske protein, while the 4 small subunits are PetG, PetL, PetM and PetN. The complex functions as a dimer. It depends on heme as a cofactor.

The protein resides in the plastid. The protein localises to the chloroplast thylakoid membrane. In terms of biological role, component of the cytochrome b6-f complex, which mediates electron transfer between photosystem II (PSII) and photosystem I (PSI), cyclic electron flow around PSI, and state transitions. The chain is Cytochrome f from Aethionema cordifolium (Lebanon stonecress).